A 487-amino-acid polypeptide reads, in one-letter code: MRRGERRDAGGPRPESPVPAGRASLEEPPDGPSAGQATGPGEGRRSTESEVYDDGTNTFFWRAHTLTVLFILTCTLGYVTLLEETPQDTAYNTKRGIVASILVFLCFGVTQAKDGPFSRPHPAYWRFWLCVSVVYELFLIFILFQTVQDGRQFLKYVDPKLGVPLPERDYGGNCLIYDPDNETDPFHNIWDKLDGFVPAHFLGWYLKTLMIRDWWMCMIISVMFEFLEYSLEHQLPNFSECWWDHWIMDVLVCNGLGIYCGMKTLEWLSLKTYKWQGLWNIPTYKGKMKRIAFQFTPYSWVRFEWKPASSLRRWLAVCGIILVFLLAELNTFYLKFVLWMPPEHYLVLLRLVFFVNVGGVAMREIYDFMDDPKPHKKLGPQAWLVAAITATELLIVVKYDPHTLTLSLPFYISQCWTLGSVLALTWTVWRFFLRDITLRYKETRWQKWQNKDDQGSTVGNGDQHPLGLDEDLLGPGVAEGEGAPTPN.

Basic and acidic residues predominate over residues 1-10; sequence MRRGERRDAG. The interval 1–50 is disordered; the sequence is MRRGERRDAGGPRPESPVPAGRASLEEPPDGPSAGQATGPGEGRRSTESE. Topologically, residues 1–62 are cytoplasmic; it reads MRRGERRDAG…DDGTNTFFWR (62 aa). 2 positions are modified to phosphoserine: Ser-16 and Ser-24. Residues 63–83 traverse the membrane as a helical segment; the sequence is AHTLTVLFILTCTLGYVTLLE. Over 84 to 96 the chain is Lumenal; the sequence is ETPQDTAYNTKRG. The helical transmembrane segment at 97 to 117 threads the bilayer; the sequence is IVASILVFLCFGVTQAKDGPF. At 118–126 the chain is on the cytoplasmic side; it reads SRPHPAYWR. Residues 127–147 traverse the membrane as a helical segment; it reads FWLCVSVVYELFLIFILFQTV. The Lumenal portion of the chain corresponds to 148 to 313; that stretch reads QDGRQFLKYV…EWKPASSLRR (166 aa). N-linked (GlcNAc...) asparagine glycosylation is present at Asn-181. A helical membrane pass occupies residues 314-334; it reads WLAVCGIILVFLLAELNTFYL. A topological domain (cytoplasmic) is located at residue Lys-335. The chain crosses the membrane as a helical span at residues 336–356; it reads FVLWMPPEHYLVLLRLVFFVN. Residues 357-376 are Lumenal-facing; that stretch reads VGGVAMREIYDFMDDPKPHK. A helical membrane pass occupies residues 377–397; the sequence is KLGPQAWLVAAITATELLIVV. Residues 398 to 403 lie on the Cytoplasmic side of the membrane; that stretch reads KYDPHT. The helical transmembrane segment at 404–424 threads the bilayer; the sequence is LTLSLPFYISQCWTLGSVLAL. Topologically, residues 425–487 are lumenal; the sequence is TWTVWRFFLR…AEGEGAPTPN (63 aa). Residues 451–487 are disordered; that stretch reads KDDQGSTVGNGDQHPLGLDEDLLGPGVAEGEGAPTPN. At Thr-485 the chain carries Phosphothreonine.

This sequence belongs to the phosphatidyl serine synthase family.

It localises to the endoplasmic reticulum membrane. The catalysed reaction is a 1,2-diacyl-sn-glycero-3-phosphoethanolamine + L-serine = a 1,2-diacyl-sn-glycero-3-phospho-L-serine + ethanolamine. It catalyses the reaction 1-hexadecanoyl-2-(9Z-octadecenoyl)-sn-glycero-3-phosphoethanolamine + L-serine = 1-hexadecanoyl-2-(9Z-octadecenoyl)-sn-glycero-3-phospho-L-serine + ethanolamine. It carries out the reaction 1-hexadecanoyl-2-(4Z,7Z,10Z,13Z,16Z,19Z-docosahexaenoyl)-sn-glycero-3-phosphoethanolamine + L-serine = 1-hexadecanoyl-2-(4Z,7Z,10Z,13Z,16Z,19Z-docosahexaenoyl)-sn-glycero-3-phosphoserine + ethanolamine. The enzyme catalyses 1-octadecanoyl-2-(5Z,8Z,11Z,14Z)-eicosatetraenoyl-sn-glycero-3-phosphoethanolamine + L-serine = 1-octadecanoyl-2-(5Z,8Z,11Z,14Z)-eicosatetraenoyl-sn-glycero-3-phosphoserine + ethanolamine. The catalysed reaction is 1-octadecanoyl-2-(4Z,7Z,10Z,13Z,16Z,19Z-docosahexaenoyl)-sn-glycero-3-phosphoethanolamine + L-serine = 1-octadecanoyl-2-(4Z,7Z,10Z,13Z,16Z,19Z-docosahexaenoyl)-sn-glycero-3-phosphoserine + ethanolamine. It catalyses the reaction 1-(1Z-octadecenyl)-2-(4Z,7Z,10Z,13Z,16Z,19Z-docosahexaenoyl)-sn-glycero-3-phosphoethanolamine + L-serine = 1-(1Z-octadecenyl)-2-(4Z,7Z,10Z,13Z,16Z,19Z-docosahexaenoyl)-sn-glycero-3-phospho-L-serine + ethanolamine. It carries out the reaction 1-octadecanoyl-2-(9Z-octadecenoyl)-sn-glycero-3-phosphoethanolamine + L-serine = 1-octadecanoyl-2-(9Z-octadecenoyl)-sn-glycero-3-phospho-L-serine + ethanolamine. The enzyme catalyses 1-(1Z-octadecenyl)-2-(9Z-octadecenoyl)-sn-glycero-3-phosphoethanolamine + L-serine = 1-(1Z-octadecenyl)-2-(9Z-octadecenoyl)-sn-glycero-3-phospho-L-serine + ethanolamine. The catalysed reaction is 1-(1Z-octadecenyl)-2-(5Z,8Z,11Z,14Z- eicosatetraenoyl)-sn-glycero-3-phosphoethanolamine + L-serine = 1-(1Z-octadecenyl)-2-(5Z,8Z,11Z,14Z-eicosatetraenoyl)-sn-glycero-3-phospho-L-serine + ethanolamine. Its pathway is phospholipid metabolism; phosphatidylserine biosynthesis. With respect to regulation, requires calcium ions. Inhibited by exogenous phosphatidylserine. Its function is as follows. Catalyzes a base-exchange reaction in which the polar head group of phosphatidylethanolamine (PE) or phosphatidylcholine (PC) is replaced by L-serine. Catalyzes the conversion of phosphatatidylethanolamine and does not act on phosphatidylcholine. Can utilize both phosphatidylethanolamine (PE) plasmalogen and diacyl PE as substrate and the latter is six times better utilized, indicating the importance of an ester linkage at the sn-1 position. Although it shows no sn-1 fatty acyl preference, exhibits significant preference towards docosahexaenoic acid (22:6n-3) compared with 18:1 or 20:4 at the sn-2 position. This chain is Phosphatidylserine synthase 2 (PTDSS2), found in Homo sapiens (Human).